An 89-amino-acid polypeptide reads, in one-letter code: Large ribosomal subunit protein bL27 (89 aa).

Positions 1-23 (MAHKKAGGSSRNGRDSESKRLGV) are disordered.

Belongs to the bacterial ribosomal protein bL27 family.

The protein is Large ribosomal subunit protein bL27 of Rhizobium meliloti (strain 1021) (Ensifer meliloti).